Reading from the N-terminus, the 793-residue chain is E3 UFM1-protein ligase 1 (793 aa).

A2 is modified (N-acetylalanine). Residues A2–P200 form a mediates interaction with DDRGK1 region. The required for E3 UFM1-protein ligase activity stretch occupies residues A2–F212. The segment at D121–S250 is involved in CDK5RAP3-binding. Positions P200–D400 are mediates interaction with TRIP4. A disordered region spans residues V410 to D473. R433 bears the Omega-N-methylarginine mark. Residues S458 and S462 each carry the phosphoserine modification. The interval I490–L683 is mediates interaction with CDK5RAP3. The residue at position 535 (T535) is a Phosphothreonine. The segment at N742–K769 is disordered. Phosphoserine occurs at positions 752 and 753. Basic and acidic residues predominate over residues K758–K769.

Belongs to the UFL1 family. In terms of assembly, catalytic component of the UFM1 ribosome E3 ligase (UREL) complex, composed of UFL1, DDRGK1 and CDK5RAP3. Interacts with E2-like enzyme UFC1. Interacts with RELA. Interacts with NBN; promoting recruitment to double-strand breaks following DNA damage. Interacts (when phosphorylated) with YWHAG/14-3-3-gamma; sequestering UFL1 and preventing its association with PDCD1/PD-1 substrate. In terms of processing, ubiquitinated, leading to its degradation by the proteasome. Interaction with CDK5RAP3 protects both proteins against ubiquitination and degradation via the proteasome. Post-translationally, phosphorylated at Ser-462 by ATM, enhancing protein ligase activity and promoting ATM activation in a positive feedback loop. Phosphorylation at Thr-535 by AMPK promotes its interaction with YWHAG/14-3-3-gamma, thereby preventing UFL1 association with PDCD1/PD-1 substrate. In terms of tissue distribution, ubiquitously expressed with expression detected in brain, skeletal muscle, lung, heart, gall bladder, liver, small intestine, pancreas, spleen and kidney (at protein level). At 8 weeks after birth, high expression in the Purkinje cell layer of the cerebellum.

Its subcellular location is the endoplasmic reticulum membrane. It localises to the cytoplasm. The protein localises to the cytosol. The protein resides in the nucleus. It is found in the chromosome. E3 protein ligase that mediates ufmylation, the covalent attachment of the ubiquitin-like modifier UFM1 to lysine residues on target proteins, and which plays a key role in various processes, such as ribosome recycling, response to DNA damage, interferon response or reticulophagy (also called ER-phagy). Catalyzes ufmylation of many protein, such as CD274/PD-L1, CDK5RAP3, CYB5R3, DDRGK1, EIF6, histone H4, MRE11, P4HB, PDCD1/PD-1, TRIP4, RPN1, RPS20/uS10, RPL10/uL16, RPL26/uL24, SYVN1/HRD1 and TP53/p53. As part of the UREL complex, plays a key role in ribosome recycling by catalyzing mono-ufmylation of RPL26/uL24 subunit of the 60S ribosome. Ufmylation of RPL26/uL24 occurs on free 60S ribosomes following ribosome dissociation: it weakens the junction between post-termination 60S subunits and SEC61 translocons, promoting release and recycling of the large ribosomal subunit from the endoplasmic reticulum membrane. Ufmylation of RPL26/uL24 and subsequent 60S ribosome recycling either take place after normal termination of translation or after ribosome stalling during cotranslational translocation at the endoplasmic reticulum. Involved in reticulophagy in response to endoplasmic reticulum stress by mediating ufmylation of proteins such as CYB5R3 and RPN1, thereby promoting lysosomal degradation of ufmylated proteins. Ufmylation in response to endoplasmic reticulum stress is essential for processes such as hematopoiesis, blood vessel morphogenesis or inflammatory response. Mediates ufmylation of DDRGK1 and CDK5RAP3; the role of these modifications is however unclear: as both DDRGK1 and CDK5RAP3 act as substrate adapters for ufmylation, it is uncertain whether ufmylation of these proteins is, a collateral effect or is required for ufmylation. Acts as a negative regulator of T-cell activation by mediating ufmylation and stabilization of PDCD1/PD-1. Also involved in the response to DNA damage: recruited to double-strand break sites following DNA damage and mediates monoufmylation of histone H4 and ufmylation of MRE11. Mediates ufmylation of TP53/p53, promoting its stability. Catalyzes ufmylation of TRIP4, thereby playing a role in nuclear receptor-mediated transcription. Required for hematopoietic stem cell function and hematopoiesis. This Rattus norvegicus (Rat) protein is E3 UFM1-protein ligase 1.